The sequence spans 212 residues: Thymidylate kinase (212 aa).

Residue 11–18 coordinates ATP; the sequence is GLEGAGKT.

It belongs to the thymidylate kinase family.

It catalyses the reaction dTMP + ATP = dTDP + ADP. In terms of biological role, phosphorylation of dTMP to form dTDP in both de novo and salvage pathways of dTTP synthesis. The chain is Thymidylate kinase from Buchnera aphidicola subsp. Schizaphis graminum (strain Sg).